A 79-amino-acid polypeptide reads, in one-letter code: Small ribosomal subunit protein bS18 (79 aa).

This sequence belongs to the bacterial ribosomal protein bS18 family. In terms of assembly, part of the 30S ribosomal subunit. Forms a tight heterodimer with protein bS6.

Functionally, binds as a heterodimer with protein bS6 to the central domain of the 16S rRNA, where it helps stabilize the platform of the 30S subunit. In Renibacterium salmoninarum (strain ATCC 33209 / DSM 20767 / JCM 11484 / NBRC 15589 / NCIMB 2235), this protein is Small ribosomal subunit protein bS18.